The sequence spans 435 residues: tRNA(Ile)-lysidine synthase (435 aa).

Position 23-28 (23-28 (SGGMDS)) interacts with ATP.

Belongs to the tRNA(Ile)-lysidine synthase family.

Its subcellular location is the cytoplasm. The enzyme catalyses cytidine(34) in tRNA(Ile2) + L-lysine + ATP = lysidine(34) in tRNA(Ile2) + AMP + diphosphate + H(+). Ligates lysine onto the cytidine present at position 34 of the AUA codon-specific tRNA(Ile) that contains the anticodon CAU, in an ATP-dependent manner. Cytidine is converted to lysidine, thus changing the amino acid specificity of the tRNA from methionine to isoleucine. The polypeptide is tRNA(Ile)-lysidine synthase (Xanthomonas campestris pv. campestris (strain 8004)).